Consider the following 155-residue polypeptide: 6,7-dimethyl-8-ribityllumazine synthase (155 aa).

5-amino-6-(D-ribitylamino)uracil is bound by residues phenylalanine 23, 57–59, and 81–83; these read AFE and AVI. Position 86–87 (86–87) interacts with (2S)-2-hydroxy-3-oxobutyl phosphate; sequence AT. The active-site Proton donor is the histidine 89. Residue phenylalanine 114 participates in 5-amino-6-(D-ribitylamino)uracil binding. Arginine 128 is a (2S)-2-hydroxy-3-oxobutyl phosphate binding site.

The protein belongs to the DMRL synthase family.

The catalysed reaction is (2S)-2-hydroxy-3-oxobutyl phosphate + 5-amino-6-(D-ribitylamino)uracil = 6,7-dimethyl-8-(1-D-ribityl)lumazine + phosphate + 2 H2O + H(+). It functions in the pathway cofactor biosynthesis; riboflavin biosynthesis; riboflavin from 2-hydroxy-3-oxobutyl phosphate and 5-amino-6-(D-ribitylamino)uracil: step 1/2. In terms of biological role, catalyzes the formation of 6,7-dimethyl-8-ribityllumazine by condensation of 5-amino-6-(D-ribitylamino)uracil with 3,4-dihydroxy-2-butanone 4-phosphate. This is the penultimate step in the biosynthesis of riboflavin. This Pelotomaculum thermopropionicum (strain DSM 13744 / JCM 10971 / SI) protein is 6,7-dimethyl-8-ribityllumazine synthase.